The chain runs to 299 residues: Ficolin-3 (299 aa).

A signal peptide spans M1–T23. Residues P44 to V81 form a disordered region. The 33-residue stretch at G48 to P80 folds into the Collagen-like domain. Hydroxyproline is present on residues P50, P53, P59, P65, P68, and P77. Positions P61–K70 are enriched in pro residues. One can recognise a Fibrinogen C-terminal domain in the interval L84–R299. 2 cysteine pairs are disulfide-bonded: C86–C110 and C93–C121. A glycan (N-linked (GlcNAc...) (complex) asparagine) is linked at N189. The Ca(2+) site is built by D237, D239, S241, and S243. A disulfide bond links C245 and C258. An a carbohydrate-binding site is contributed by C258–Y259.

This sequence belongs to the ficolin lectin family. As to quaternary structure, homotrimer. May form an octadecamer consisting of an elementary trimer unit. Does not interact with fibronectin, elastin or zymosan. Interacts with MASP1 and MASP2. Post-translationally, the N-terminus is blocked. In terms of tissue distribution, liver and lung. In liver it is produced by bile duct epithelial cells and hepatocytes. In lung it is produced by both ciliated bronchial epithelial cells and type II alveolar epithelial cells.

The protein localises to the secreted. May function in innate immunity through activation of the lectin complement pathway. Calcium-dependent and GlcNAc-binding lectin. Has affinity with GalNAc, GlcNAc, D-fucose, as mono/oligosaccharide and lipopolysaccharides from S.typhimurium and S.minnesota. This is Ficolin-3 (FCN3) from Homo sapiens (Human).